Here is a 134-residue protein sequence, read N- to C-terminus: Beta-synuclein (134 aa).

2 repeat units span residues 20 to 30 and 31 to 41. Positions 20 to 67 are 4 X 11 AA tandem repeats of [EGS]-K-T-K-[EQ]-[GQ]-V-X(4); it reads EKTKQGVTEAAEKTKEGVLYVGSKTKEGVVQGVASVAEKTKEQASHLG. The 3; approximate repeat unit spans residues 42–56; that stretch reads SKTKEGVVQGVASVA. Repeat unit 4 spans residues 57–67; sequence EKTKEQASHLG. A disordered region spans residues 97–134; it reads EVAQEAAEEPLIEPLMEPEGESYEEQPQEEYQEYEPEA. The span at 98-134 shows a compositional bias: acidic residues; sequence VAQEAAEEPLIEPLMEPEGESYEEQPQEEYQEYEPEA. At serine 118 the chain carries Phosphoserine; by BARK1, CK2 and GRK5.

This sequence belongs to the synuclein family. Post-translationally, phosphorylated. Phosphorylation by G-protein coupled receptor kinases (GRK) is more efficient than phosphorylation by CK1, CK2 and CaM-kinase II. In terms of tissue distribution, specifically present in synapses around neurons but not in glial cells.

It is found in the cytoplasm. Its function is as follows. May be involved in neuronal plasticity. The polypeptide is Beta-synuclein (SNCB) (Bos taurus (Bovine)).